The primary structure comprises 253 residues: Triosephosphate isomerase (253 aa).

8–10 (NWK) is a substrate binding site. His-91 functions as the Electrophile in the catalytic mechanism. Glu-168 serves as the catalytic Proton acceptor. Substrate-binding positions include Gly-174, Ser-213, and 234–235 (GG).

This sequence belongs to the triosephosphate isomerase family. As to quaternary structure, homodimer.

It is found in the cytoplasm. It carries out the reaction D-glyceraldehyde 3-phosphate = dihydroxyacetone phosphate. Its pathway is carbohydrate biosynthesis; gluconeogenesis. The protein operates within carbohydrate degradation; glycolysis; D-glyceraldehyde 3-phosphate from glycerone phosphate: step 1/1. Functionally, involved in the gluconeogenesis. Catalyzes stereospecifically the conversion of dihydroxyacetone phosphate (DHAP) to D-glyceraldehyde-3-phosphate (G3P). In Acidiphilium cryptum (strain JF-5), this protein is Triosephosphate isomerase.